Consider the following 147-residue polypeptide: MVHLTAEEKSAVTTLWGKVNVDEVGGEALGRLLVVYPWTQRFFDSFGDLSTPDAVMNNPKVKAHGKKVLGAFSDGLTHLDNLKGTFAQLSELHCDKLHVDPENFRLLGNVLVCVLAHHFGKEFTPQVQAAYQKVVAGVANALAHKYH.

Val-2 is modified (N-acetylvaline). A Globin domain is found at 3–147 (HLTAEEKSAV…VANALAHKYH (145 aa)). Phosphothreonine is present on Thr-13. Ser-45 bears the Phosphoserine mark. Lys-60 is subject to N6-acetyllysine. Residue His-64 coordinates heme b. N6-acetyllysine is present on Lys-83. Position 93 (His-93) interacts with heme b. An S-nitrosocysteine modification is found at Cys-94. At Lys-145 the chain carries N6-acetyllysine.

It belongs to the globin family. Heterotetramer of two alpha chains and two beta chains. In terms of tissue distribution, red blood cells.

In terms of biological role, involved in oxygen transport from the lung to the various peripheral tissues. The polypeptide is Hemoglobin subunit beta (HBB) (Sapajus apella (Brown-capped capuchin)).